The following is a 314-amino-acid chain: MSTVYYPSVILKKSPLPLKLTPARASGNFGTPITAALQRASFNITIITRTESSSTFPAGLPIIRTSYTLENLTTALAGQDAAICVVGPGGIGAQVLMIEAAEAAGVKRFIVDDFGWGPGFRNLPEFRAIHAHRRAGWELAKAKAQANPNFTFTGITSGNPIDWAMKRFPLMGFDIARCSAIIYDSGTEKFTATTLAGIGQSVVGVLQHPDETANRFVKVLSIITNQNELLEAFQRVTGRQWPVQRASAQTLIESGQQKFQAGMGGWVLELVVAQMYDEGEARCVMAPSWEASDSPLLGVKKESADEVVAKVLQL.

Belongs to the NmrA-type oxidoreductase family. Isoflavone reductase subfamily.

It participates in secondary metabolite biosynthesis. Oxidoreductase; part of the gene cluster that mediates the biosynthesis of oxaleimides, cytotoxic compounds containing an unusual disubstituted succinimide moiety. The first step of the pathway is provided by the HR-PKS poxF that serves in a new mode of collaborative biosynthesis with the PKS-NRPS poxE, by providing the olefin containing amino acid substrate via the synthesis of an ACP-bound dec-4-enoate. The cytochrome P450 monooxygenase poxM-catalyzed oxidation at the alpha-position creates the enzyme-bound 2-hydroxydec-4-enoyl-ACP thioester, which may be prone to spontaneous hydrolysis to yield 2-hydroxydec-4-enoic acid due to increased electrophilicity of the carbonyl. 2-hydroxydec-4-enoic acid can then be further oxidized by poxM to yield the alpha-ketoacid 2-oxodec-4-enoicacid, which is reductively aminated by the aminotransferase poxL to yield (S,E)-2-aminodec-4-enoic acid. The Hybrid PKS-NRPS synthetase poxE then performs condensation between the octaketide product of its PKS modules and the amino group of (S,E)-2-aminodec-4-enoic acid which is activated and incorporated by the adenylation domain. The resulting aminoacyl product can be cyclized by the Diels-Alderase PoxQ and reductively released by the reductive (R) domain of poxE to yield an aldehyde intermediate. The released aldehyde is then substrate for a Knoevenagel condensation by the hydrolyase poxO followed by an oxidation at the 5-position of the pyrrolidone ring. The presence of the olefin from the amino acid building block allows for migration of the substituted allyl group to occur. This allylic transposition reaction takes place in a conjugate addition, semipinacol-like fashion to yield a succinimide intermediate. Iterative two-electron oxidations of the C7 methyl of the succinimide intermediate to the carboxylic acid can be catalyzed by one of two remaining cytochrome P450 monooxygenasess poxC or poxD to yield oxaleimide A. Subsequent oxidation yields the maleimide scaffold oxaleimide I. Both oxaleimide A and oxaleimide I can undergo oxidative modifications in the decalin ring to yield the series of products oxaleimides B to H. In Penicillium oxalicum (strain 114-2 / CGMCC 5302) (Penicillium decumbens), this protein is Oxidoreductase poxI.